Consider the following 589-residue polypeptide: Cytochrome P450 monooxygenase TRI13 (589 aa).

The first 21 residues, 1 to 21 (MFLSLCLMVLALYLLYKWALP), serve as a signal peptide directing secretion. Asn52, Asn219, Asn243, and Asn366 each carry an N-linked (GlcNAc...) asparagine glycan. Cys531 provides a ligand contact to heme.

Belongs to the cytochrome P450 family. Heme is required as a cofactor.

It functions in the pathway sesquiterpene biosynthesis; trichothecene biosynthesis. Functionally, cytochrome P450 monooxygenase; part of the core gene cluster that mediates the biosynthesis of trichothecenes, a very large family of chemically related bicyclic sesquiterpene compounds acting as mycotoxins, including T2-toxin. The biosynthesis of trichothecenes begins with the cyclization of farnesyl diphosphate to trichodiene and is catalyzed by the trichodiene synthase TRI5. Trichodiene undergoes a series of oxygenations catalyzed by the cytochrome P450 monooxygenase TRI4. TRI4 controls the addition of four oxygens at C-2, C-3, C-11, and the C-12, C-13-epoxide to form the intermediate isotrichotriol. Isotrichotriol then undergoes a non-enzymatic isomerization and cyclization to form isotrichodermol. During this process, the oxygen at the C-2 position becomes the pyran ring oxygen and the hydroxyl group at C-11 is lost. More complex type A trichothecenes are built by modifying isotrichodermol through a series of paired hydroxylation and acetylation or acylation steps. Isotrichodermol is converted to isotrichodermin by the acetyltransferase TRI101. TRI101 encodes a C-3 transacetylase that acts as a self-protection or resistance factor during biosynthesis and that the presence of a free C-3 hydroxyl group is a key component of Fusarium trichothecene phytotoxicity. A second hydroxyl group is added to C-15 by the trichothecene C-15 hydroxylase TRI11, producing 15-decalonectrin, which is then acetylated by TRI3, producing calonectrin. A third hydroxyl group is added at C-4 by the cytochrome P450 monooxygenase TRI13, converting calonectrin to 3,15-diacetoxyspirpenol, which is subsequently acetylated by the acetyltransferase TRI7. A fourth hydroxyl group is added to C-8 by the cytochrome P450 monooxygenase TRI1, followed by the addition of an isovaleryl moiety by TRI16. Finally, the acetyl group is removed from the C-3 position by the trichothecene C-3 esterase TRI8 to produce T-2 toxin. The sequence is that of Cytochrome P450 monooxygenase TRI13 from Fusarium sporotrichioides.